The primary structure comprises 130 residues: MARPTKKGGAKKQKKNVPNGIAHIQSTFNNTIVTIADTRGDVISWASAGSSGFKGAKKGTPFAAQTAADNAARRAMEQGMRQIEVMVSGPGAGRETAIRALQGAGLEITLIRDVTPIPHNGCRPPKRRRV.

Belongs to the universal ribosomal protein uS11 family. In terms of assembly, part of the 30S ribosomal subunit. Interacts with proteins S7 and S18. Binds to IF-3.

Its function is as follows. Located on the platform of the 30S subunit, it bridges several disparate RNA helices of the 16S rRNA. Forms part of the Shine-Dalgarno cleft in the 70S ribosome. The polypeptide is Small ribosomal subunit protein uS11 (Gloeothece citriformis (strain PCC 7424) (Cyanothece sp. (strain PCC 7424))).